The primary structure comprises 581 residues: Arginine--tRNA ligase (581 aa).

The 'HIGH' region motif lies at 122-132 (PNVAKPMHVGH).

It belongs to the class-I aminoacyl-tRNA synthetase family. As to quaternary structure, monomer.

It localises to the cytoplasm. It catalyses the reaction tRNA(Arg) + L-arginine + ATP = L-arginyl-tRNA(Arg) + AMP + diphosphate. This Francisella tularensis subsp. novicida (strain U112) protein is Arginine--tRNA ligase.